A 137-amino-acid polypeptide reads, in one-letter code: Large ribosomal subunit protein uL11 (137 aa).

This sequence belongs to the universal ribosomal protein uL11 family. Part of the ribosomal stalk of the 50S ribosomal subunit. Interacts with L10 and the large rRNA to form the base of the stalk. L10 forms an elongated spine to which L12 dimers bind in a sequential fashion forming a multimeric L10(L12)X complex. In terms of processing, one or more lysine residues are methylated.

Functionally, forms part of the ribosomal stalk which helps the ribosome interact with GTP-bound translation factors. The sequence is that of Large ribosomal subunit protein uL11 from Mycoplasma pneumoniae (strain ATCC 29342 / M129 / Subtype 1) (Mycoplasmoides pneumoniae).